The chain runs to 397 residues: Phosphoglycerate kinase (397 aa).

Substrate-binding positions include 23-25 (DFN), Arg38, 61-64 (HMGK), Arg122, and Arg155. Residues Lys206, Gly296, Glu327, and 353–356 (GGDS) contribute to the ATP site.

Belongs to the phosphoglycerate kinase family. Monomer.

It localises to the cytoplasm. It carries out the reaction (2R)-3-phosphoglycerate + ATP = (2R)-3-phospho-glyceroyl phosphate + ADP. Its pathway is carbohydrate degradation; glycolysis; pyruvate from D-glyceraldehyde 3-phosphate: step 2/5. This is Phosphoglycerate kinase from Clostridium perfringens (strain SM101 / Type A).